Reading from the N-terminus, the 418-residue chain is Serine hydroxymethyltransferase (418 aa).

(6S)-5,6,7,8-tetrahydrofolate-binding positions include L121 and 125–127 (GHL). Residue K230 is modified to N6-(pyridoxal phosphate)lysine. 356-358 (SPF) is a binding site for (6S)-5,6,7,8-tetrahydrofolate.

The protein belongs to the SHMT family. As to quaternary structure, homodimer. It depends on pyridoxal 5'-phosphate as a cofactor.

It is found in the cytoplasm. The enzyme catalyses (6R)-5,10-methylene-5,6,7,8-tetrahydrofolate + glycine + H2O = (6S)-5,6,7,8-tetrahydrofolate + L-serine. It participates in one-carbon metabolism; tetrahydrofolate interconversion. Its pathway is amino-acid biosynthesis; glycine biosynthesis; glycine from L-serine: step 1/1. In terms of biological role, catalyzes the reversible interconversion of serine and glycine with tetrahydrofolate (THF) serving as the one-carbon carrier. This reaction serves as the major source of one-carbon groups required for the biosynthesis of purines, thymidylate, methionine, and other important biomolecules. Also exhibits THF-independent aldolase activity toward beta-hydroxyamino acids, producing glycine and aldehydes, via a retro-aldol mechanism. The sequence is that of Serine hydroxymethyltransferase from Pseudoalteromonas atlantica (strain T6c / ATCC BAA-1087).